Consider the following 368-residue polypeptide: tRNA-specific 2-thiouridylase MnmA (368 aa).

Residues 12 to 19 (AMSGGVDS) and methionine 38 contribute to the ATP site. Cysteine 110 functions as the Nucleophile in the catalytic mechanism. An intrachain disulfide couples cysteine 110 to cysteine 207. Glycine 134 is an ATP binding site. Positions 157-159 (KDQ) are interaction with tRNA. The Cysteine persulfide intermediate role is filled by cysteine 207. An interaction with tRNA region spans residues 312–313 (RY).

It belongs to the MnmA/TRMU family.

The protein resides in the cytoplasm. It catalyses the reaction S-sulfanyl-L-cysteinyl-[protein] + uridine(34) in tRNA + AH2 + ATP = 2-thiouridine(34) in tRNA + L-cysteinyl-[protein] + A + AMP + diphosphate + H(+). Functionally, catalyzes the 2-thiolation of uridine at the wobble position (U34) of tRNA, leading to the formation of s(2)U34. This chain is tRNA-specific 2-thiouridylase MnmA, found in Geobacter metallireducens (strain ATCC 53774 / DSM 7210 / GS-15).